The primary structure comprises 614 residues: MRILTIHARKFHYKALSQALDKPEELTNENKEGFFENVLVVFTSVEEGDNEKVVEKAVTEILDIANRVKPKTILLYPYAHLSSDLASPSQALEIMKLLEQKLRGKTDLEVYRAPFGWYKEFMLDCYGHPLSELSKTIRITGGGEVVRRELKKEFYILTPDGKVYDPEKFNYDKYPDLKILVDKEVFGKELPGGVNRVNDYCRKFGFEWEPMSDHGHMRYGPHAVIIMESIMQYSWNIVRSLGIPVYKVMGTNMFNLSEKPVLEHALLFGDRLYELKVDNEKFVLRYAACHQQFAMLRDWIISYKNLPFGMFEVADSYRLEQRGELNLCFRLRKFYMPDLHILNRDLNEAIKISRIVQDKILEEIAKIGRKYVALYNVTSDFFDKYRDILIEFVRRENYPVLVSVIPSGIYYWVLNVEYHIIDNLNRPREIATFQIDIGNGERFNITYTDEKGEKHHPVIIHTAIIGGIERFIYTIFDTAALMEKEGKTPYIPTWLAPVQVRIIPIKNEYLDYAEKVAEKIENAGFRVDIDDRGESLGKKIRDAGREWIPYIVVIGEREVRSNTINVRIRRTNDQKVMVTDELIRILEEETKNYPRVSLTMPKYLSKRPIPSYHA.

The tract at residues 1 to 138 is editing domain; sequence MRILTIHARK…PLSELSKTIR (138 aa). 2 catalytic regions span residues 195–492 and 196–492; these read NRVN…PYIP and RVND…PYIP. Residues Cys289, His340, and His461 each contribute to the Zn(2+) site.

Belongs to the class-II aminoacyl-tRNA synthetase family. As to quaternary structure, homodimer. Requires Zn(2+) as cofactor.

The protein resides in the cytoplasm. The enzyme catalyses tRNA(Thr) + L-threonine + ATP = L-threonyl-tRNA(Thr) + AMP + diphosphate + H(+). In terms of biological role, catalyzes the attachment of threonine to tRNA(Thr) in a two-step reaction: L-threonine is first activated by ATP to form Thr-AMP and then transferred to the acceptor end of tRNA(Thr). Also edits incorrectly charged L-seryl-tRNA(Thr). This is Threonine--tRNA ligase from Staphylothermus marinus (strain ATCC 43588 / DSM 3639 / JCM 9404 / F1).